We begin with the raw amino-acid sequence, 408 residues long: Cytotoxic granule-associated RNA binding protein tiar-1 (408 aa).

RRM domains follow at residues 46-121, 135-213, and 241-312; these read RTLY…WAVE, FHVF…WATR, and TSVY…WGKT.

Expressed in the germline and also in somatic tissues. Expressed in Ggonads and oocytes. Expression is slightly reduced in the most proximal oocytes, especially the -1 oocyte. Aggregates mostly in the head neurons, muscles, intestine, vulval and hypodermal cells during heat shock. Expressed only in the intestine as a response to heat shock, starvation and dietary restriction.

The protein resides in the cytoplasm. It is found in the nucleus. Its subcellular location is the stress granule. Acts downstream of ced-9 in the induction of germline apoptosis under different stress conditions including starvation, osmotic, oxidative, heat shock and UV stress. Plays a role in the formation of stress granules in response to heat shock and oxidative stress but not in response to osmotic stress. Required for the formation of stress granules in the core gonad but may not play a critical role in this process in the oocytes. Plays an important role in the formation of stress granules in the embryo. Protects female germ cells and embryos from heat shock. The protein is Cytotoxic granule-associated RNA binding protein tiar-1 of Caenorhabditis elegans.